The sequence spans 314 residues: Beta-lactamase 2 (314 aa).

Residues 1 to 26 form the signal peptide; that stretch reads MLHTRIRRATLGAVAALSLVPVMACG. The segment covering 32–47 has biased composition (low complexity); that stretch reads DAAEPAGSAPSSSAAA. A disordered region spans residues 32–51; that stretch reads DAAEPAGSAPSSSAAAHKPG. S96 acts as the Acyl-ester intermediate in catalysis. A substrate-binding site is contributed by 258–260; it reads KTG.

It belongs to the class-A beta-lactamase family.

The catalysed reaction is a beta-lactam + H2O = a substituted beta-amino acid. This Streptomyces cacaoi protein is Beta-lactamase 2 (blaU).